Consider the following 248-residue polypeptide: Ribonuclease PH (248 aa).

Phosphate is bound by residues Arg-86 and Gly-124–Arg-126.

It belongs to the RNase PH family. Homohexameric ring arranged as a trimer of dimers.

It catalyses the reaction tRNA(n+1) + phosphate = tRNA(n) + a ribonucleoside 5'-diphosphate. Functionally, phosphorolytic 3'-5' exoribonuclease that plays an important role in tRNA 3'-end maturation. Removes nucleotide residues following the 3'-CCA terminus of tRNAs; can also add nucleotides to the ends of RNA molecules by using nucleoside diphosphates as substrates, but this may not be physiologically important. Probably plays a role in initiation of 16S rRNA degradation (leading to ribosome degradation) during starvation. This chain is Ribonuclease PH, found in Clostridium perfringens (strain 13 / Type A).